We begin with the raw amino-acid sequence, 556 residues long: 2-succinyl-5-enolpyruvyl-6-hydroxy-3-cyclohexene-1-carboxylate synthase (556 aa).

Belongs to the TPP enzyme family. MenD subfamily. As to quaternary structure, homodimer. Mg(2+) is required as a cofactor. The cofactor is Mn(2+). Requires thiamine diphosphate as cofactor.

It catalyses the reaction isochorismate + 2-oxoglutarate + H(+) = 5-enolpyruvoyl-6-hydroxy-2-succinyl-cyclohex-3-ene-1-carboxylate + CO2. It participates in quinol/quinone metabolism; 1,4-dihydroxy-2-naphthoate biosynthesis; 1,4-dihydroxy-2-naphthoate from chorismate: step 2/7. Its pathway is quinol/quinone metabolism; menaquinone biosynthesis. Its function is as follows. Catalyzes the thiamine diphosphate-dependent decarboxylation of 2-oxoglutarate and the subsequent addition of the resulting succinic semialdehyde-thiamine pyrophosphate anion to isochorismate to yield 2-succinyl-5-enolpyruvyl-6-hydroxy-3-cyclohexene-1-carboxylate (SEPHCHC). The polypeptide is 2-succinyl-5-enolpyruvyl-6-hydroxy-3-cyclohexene-1-carboxylate synthase (Salmonella heidelberg (strain SL476)).